The primary structure comprises 63 residues: uncharacterized protein (63 aa).

This is an uncharacterized protein from Orgyia pseudotsugata (Douglas-fir tussock moth).